A 513-amino-acid chain; its full sequence is GMP synthase [glutamine-hydrolyzing] (513 aa).

Residues 9–198 enclose the Glutamine amidotransferase type-1 domain; the sequence is LILVLDFGSQ…VRRVCECKGQ (190 aa). The active-site Nucleophile is the Cys86. Active-site residues include His172 and Glu174. The 190-residue stretch at 199–388 folds into the GMPS ATP-PPase domain; it reads WTMENFIEIE…LGIPEHLVWR (190 aa). ATP is bound at residue 226–232; that stretch reads SGGVDSS.

As to quaternary structure, homodimer.

The enzyme catalyses XMP + L-glutamine + ATP + H2O = GMP + L-glutamate + AMP + diphosphate + 2 H(+). The protein operates within purine metabolism; GMP biosynthesis; GMP from XMP (L-Gln route): step 1/1. Catalyzes the synthesis of GMP from XMP. The sequence is that of GMP synthase [glutamine-hydrolyzing] from Staphylococcus aureus (strain MSSA476).